The primary structure comprises 360 residues: Mediator of RNA polymerase II transcription subunit 6 (360 aa).

Disordered regions lie at residues 186–238 and 316–360; these read PAQP…NDPL and AAAA…PGAA. Low complexity-rich tracts occupy residues 190–205 and 316–325; these read SAGA…YTAS and AAAAAANANA.

It belongs to the Mediator complex subunit 6 family. In terms of assembly, component of the Mediator complex.

The protein resides in the nucleus. In terms of biological role, component of the Mediator complex, a coactivator involved in the regulated transcription of nearly all RNA polymerase II-dependent genes. Mediator functions as a bridge to convey information from gene-specific regulatory proteins to the basal RNA polymerase II transcription machinery. Mediator is recruited to promoters by direct interactions with regulatory proteins and serves as a scaffold for the assembly of a functional preinitiation complex with RNA polymerase II and the general transcription factors. The sequence is that of Mediator of RNA polymerase II transcription subunit 6 (med-6) from Neurospora crassa (strain ATCC 24698 / 74-OR23-1A / CBS 708.71 / DSM 1257 / FGSC 987).